The sequence spans 310 residues: MASSNRGNARPLKSFLHELYLKHYPEVGDVVHLLNTIGVDCDLPPSHPLLTAQRGLFLARVLQAVQQHKLLEDTIVPKILKKLAYFLELLSYYSPKDEQRDIAEVLDHLKTNRDLGLDDRLWALIRKLRQDRHHASVNVLMPGSDYTAVSLQYYDGISIGMRKVIADVCRSGYASMPSMTATHNLSHQLLMASGPSEEPCAWRGFFNQVLLWTVALCKFRRCIYYNYIQGSIATISQLLHLEIKALCSWIISQDGMRLFQHSRPLLTLWESVAANQEVTDAITLPDCAEYIDLLKHTKHVLENCSAMQYK.

Belongs to the lymphocryptovirus BBRF1 family.

Its function is as follows. Enhances the ability of BRLF1 to induce lytic infection by cooperating with it to transcriptionally activate the BZLF1 promoter. This is Transcriptional activator BRRF1 from Epstein-Barr virus (strain AG876) (HHV-4).